A 916-amino-acid chain; its full sequence is Rab3 GTPase-activating protein catalytic subunit (916 aa).

Residues 530-574 form a disordered region; sequence NSKRKSEGMVGKASSEEEEDEDDDEGEFFDCDDLTAGAGSPTKAV. Residues Ser543 and Ser544 each carry the phosphoserine modification. The segment covering 545–562 has biased composition (acidic residues); the sequence is EEEEDEDDDEGEFFDCDD.

Belongs to the Rab3-GAP catalytic subunit family. As to quaternary structure, the Rab3 GTPase-activating complex is a heterodimer composed of Rab3GAP1 and Rab3-GAP.

The protein localises to the cytoplasm. Functionally, catalytic subunit of the Rab3 GTPase-activating (Rab3GAP) complex composed of Rab3-GAP and Rab3GAP1, which has both GTPase-activating protein (GAP) activity towards Rab3, and guanine nucleotide exchange factor (GEF) activity towards Rab18. As part of the Rab3GAP complex, required for the rapid induction and sustained expression of synaptic homeostasis at the neuromuscular junction (NMJ). Also participates in the regulation of autophagy in tissues such as larval fat cells and adult muscles. The Rab3GAP complex, acts as a GAP for Rab3 by converting active Rab3-GTP to the inactive form Rab3-GDP. At the neuromuscular junction (NMJ), forms a presynaptic signaling mechanism with Rab3 that regulates progression of synaptic homeostasis at a late stage of vesicle release. Within this mechanism Rab3-GTP acts, directly or indirectly, to inhibit the progression of synaptic homeostasis, and Rab3-GAP functions to inactivate this action of Rab3-GTP. The Rab3GAP complex, acts as a GEF for Rab18 by promoting the conversion of inactive Rab18-GDP to the active form Rab18-GTP. Regulates autophagy as part of a Rab3GAP-Rab18 module. Once Rab18 is activated by the GEF Rab3GAP complex, the Rab3GAP-Rab18 module localizes to autophagosomes, and regulates autolysosome formation and maturation together with the Rab18 interacting effector, the PI3K/Vps34 Complex I. The polypeptide is Rab3 GTPase-activating protein catalytic subunit (Drosophila melanogaster (Fruit fly)).